Consider the following 247-residue polypeptide: MDTEAIGLAIAFFVIALAYAAVGQAGASGYIAAMALSGFSPLAIKPTALALNLMVSAIGTAQFLKVGQVSWRNVYPFAILGFPASALGGSVHLPERVYHPVLGLILVVSAIQMARSALRKSALVITIPKTPPLHAALITGAVIGFVSGTTGSGGGVFLAPVILFKNWGTAHQTAATTAVYNLMNSTAALIGACASWNALPNFLPWWLIAVAAGGSIGALIGSRYLSASWLRVILSVLLMVSGLKLLW.

The next 6 helical transmembrane spans lie at 5–25, 31–51, 74–94, 121–141, 202–222, and 227–247; these read AIGLAIAFFVIALAYAAVGQA, IAAMALSGFSPLAIKPTALAL, VYPFAILGFPASALGGSVHLP, SALVITIPKTPPLHAALITGA, FLPWWLIAVAAGGSIGALIGS, and ASWLRVILSVLLMVSGLKLLW.

The protein belongs to the 4-toluene sulfonate uptake permease (TSUP) (TC 2.A.102) family.

The protein resides in the cell membrane. The polypeptide is Probable membrane transporter protein y4hK (Sinorhizobium fredii (strain NBRC 101917 / NGR234)).